A 433-amino-acid polypeptide reads, in one-letter code: Steroid hormone receptor ERR2 (433 aa).

The segment at 1–38 (MSSEDRHLGSSCGSFIKTEPSSPSSGIDALSHHSPSGS) is disordered. The tract at residues 93-211 (YMLNAIPKRL…SPPAKKPLTK (119 aa)) is interaction with NANOG. Positions 100–186 (KRLCLVCGDI…RVRGGRQKYK (87 aa)) form a DNA-binding region, nuclear receptor. NR C4-type zinc fingers lie at residues 103–123 (CLVCGDIASGYHYGVASCEAC) and 139–163 (CPATNECEITKRRRKSCQACRFMKC). The essential for ESRRB transcriptional activity and interaction with NCOA3 stretch occupies residues 203-433 (PPAKKPLTKI…LFLEMLEAKV (231 aa)). The 225-residue stretch at 208–432 (PLTKIVSNLL…KLFLEMLEAK (225 aa)) folds into the NR LBD domain.

The protein belongs to the nuclear hormone receptor family. NR3 subfamily. As to quaternary structure, binds DNA as a monomer. Interacts with NR0B1; represses ESRRB activity at the GATA6 promoter. Interacts with NANOG; reciprocally modulates their transcriptional activities and activates POU5F1 expression. Interacts with NCOA3; mediates the interaction between ESRRB and RNA polymerase II complexes and allows NCOA3 corecruitment to ESRRB, KLF4, NANOG, and SOX2 enhancer regions to trigger ESRRB-dependent gene activation involved in self-renewal and pluripotency. Interacts with KDM1A; co-occupes the core set of ESRRB targets including ELF5 and EOMES. Interacts with the multiprotein complex Integrator, at least composed of INTS1, INTS2, INTS3, INTS4, INTS5, INTS6, INTS7, INTS8, INTS9/RC74, INTS10, INTS11/CPSF3L and INTS12; ESRRB is probably not a core component of the integrator complex and associates to integrator via its interaction with INTS1 and INTS9; attracts the transcriptional machinery. Interacts with JARID2. Interacts with POU5F1; recruits ESRRB near the POU5F1-SOX2 element in the NANOG proximal promoter leading to activation of NANOG expression; the interaction is DNA independent. Post-translationally, acetylated by PCAF/KAT2 (in vitro). In terms of tissue distribution, highly expressed in undifferentiated ESCs. Expressed in immature horizontal cells and in rod photoreceptors at intermediate and late stages of differentiation. Expressed in endolymph-producing epithelial cells.

The protein localises to the nucleus. The protein resides in the cytoplasm. It localises to the chromosome. Transcription factor that binds a canonical ESRRB recognition (ERRE) sequence 5'TCAAGGTCA-3' localized on promoter and enhancer of targets genes regulating their expression or their transcriptional activity. Plays a role, in a LIF-independent manner, in maintainance of self-renewal and pluripotency of embryonic and trophoblast stem cells through different signaling pathways including FGF signaling pathway and Wnt signaling pathways. Involved in morula development (2-16 cells embryos) by acting as a regulator at the 8-cell stage. Upon FGF signaling pathway activation, interacts with KDM1A by directly binding to enhancer site of ELF5 and EOMES and activating their transcription leading to self-renewal of trophoblast stem cells. Also regulates expression of multiple rod-specific genes and is required for survival of this cell type. Plays a role as transcription factor activator of GATA6, NR0B1, POU5F1 and PERM1. Plays a role as transcription factor repressor of NFE2L2 transcriptional activity and ESR1 transcriptional activity. During mitosis remains bound to a subset of interphase target genes, including pluripotency regulators, through the canonical ESRRB recognition (ERRE) sequence, leading to their transcriptional activation in early G1 phase. Can coassemble on structured DNA elements with other transcription factors like SOX2, POU5F1, KDM1A and NCOA3 to trigger ESRRB-dependent gene activation. This mechanism, in the case of SOX2 corecruitment prevents the embryonic stem cells (ESCs) to epiblast stem cells (EpiSC) transition through positive regulation of NR0B1 that inhibits the EpiSC transcriptional program. Also plays a role inner ear development by controlling expression of ion channels and transporters and in early placentation. The protein is Steroid hormone receptor ERR2 of Mus musculus (Mouse).